A 379-amino-acid chain; its full sequence is UDP-N-acetylglucosamine--N-acetylmuramyl-(pentapeptide) pyrophosphoryl-undecaprenol N-acetylglucosamine transferase (379 aa).

UDP-N-acetyl-alpha-D-glucosamine is bound by residues 17–19, asparagine 128, arginine 169, serine 197, and glutamine 298; that span reads TGG.

The protein belongs to the glycosyltransferase 28 family. MurG subfamily.

It is found in the cell inner membrane. It carries out the reaction di-trans,octa-cis-undecaprenyl diphospho-N-acetyl-alpha-D-muramoyl-L-alanyl-D-glutamyl-meso-2,6-diaminopimeloyl-D-alanyl-D-alanine + UDP-N-acetyl-alpha-D-glucosamine = di-trans,octa-cis-undecaprenyl diphospho-[N-acetyl-alpha-D-glucosaminyl-(1-&gt;4)]-N-acetyl-alpha-D-muramoyl-L-alanyl-D-glutamyl-meso-2,6-diaminopimeloyl-D-alanyl-D-alanine + UDP + H(+). It functions in the pathway cell wall biogenesis; peptidoglycan biosynthesis. Functionally, cell wall formation. Catalyzes the transfer of a GlcNAc subunit on undecaprenyl-pyrophosphoryl-MurNAc-pentapeptide (lipid intermediate I) to form undecaprenyl-pyrophosphoryl-MurNAc-(pentapeptide)GlcNAc (lipid intermediate II). The polypeptide is UDP-N-acetylglucosamine--N-acetylmuramyl-(pentapeptide) pyrophosphoryl-undecaprenol N-acetylglucosamine transferase (Brucella melitensis biotype 2 (strain ATCC 23457)).